The primary structure comprises 706 residues: Polyribonucleotide nucleotidyltransferase (706 aa).

The Mg(2+) site is built by Asp490 and Asp496. In terms of domain architecture, KH spans 556 to 615 (PRIETMQIPTDKIREVIGSGGKVIREIVEVSGAKVDINDEGIIKIASPNGDSIQKAYDMI). In terms of domain architecture, S1 motif spans 625–693 (GKIYKGKVVK…DRGKVRLAMK (69 aa)).

The protein belongs to the polyribonucleotide nucleotidyltransferase family. The cofactor is Mg(2+).

The protein resides in the cytoplasm. It catalyses the reaction RNA(n+1) + phosphate = RNA(n) + a ribonucleoside 5'-diphosphate. In terms of biological role, involved in mRNA degradation. Catalyzes the phosphorolysis of single-stranded polyribonucleotides processively in the 3'- to 5'-direction. The chain is Polyribonucleotide nucleotidyltransferase from Jannaschia sp. (strain CCS1).